The sequence spans 242 residues: Venom nerve growth factor 3 (242 aa).

The first 18 residues, Met-1–Ala-18, serve as a signal peptide directing secretion. Residues Ala-19 to Arg-125 constitute a propeptide that is removed on maturation. A compositionally biased stretch (basic and acidic residues) spans Leu-48–Asp-66. Residues Leu-48 to Leu-69 form a disordered region. 3 disulfides stabilise this stretch: Cys-139–Cys-203, Cys-181–Cys-231, and Cys-191–Cys-233. An N-linked (GlcNAc...) asparagine glycan is attached at Asn-147.

Belongs to the NGF-beta family. Homodimer; non-covalently linked. As to expression, expressed by the venom gland.

It is found in the secreted. In terms of biological role, nerve growth factor is important for the development and maintenance of the sympathetic and sensory nervous systems. It stimulates division and differentiation of sympathetic and embryonic sensory neurons as well as basal forebrain cholinergic neurons in the brain. Its relevance in the snake venom is not clear. However, it has been shown to inhibit metalloproteinase-dependent proteolysis of platelet glycoprotein Ib alpha, suggesting a metalloproteinase inhibition to prevent metalloprotease autodigestion and/or protection against prey proteases. Binds a lipid between the two protein chains in the homodimer. The lipid-bound form promotes histamine relase from mouse mast cells, contrary to the lipid-free form. The chain is Venom nerve growth factor 3 from Demansia vestigiata (Lesser black whip snake).